Here is a 176-residue protein sequence, read N- to C-terminus: Ribosome maturation factor RimM (176 aa).

Residues 93-166 (EGEYYHADLI…RVVIELPAEI (74 aa)) enclose the PRC barrel domain.

Belongs to the RimM family. Binds ribosomal protein uS19.

The protein localises to the cytoplasm. In terms of biological role, an accessory protein needed during the final step in the assembly of 30S ribosomal subunit, possibly for assembly of the head region. Essential for efficient processing of 16S rRNA. May be needed both before and after RbfA during the maturation of 16S rRNA. It has affinity for free ribosomal 30S subunits but not for 70S ribosomes. This is Ribosome maturation factor RimM from Rhodopseudomonas palustris (strain BisB18).